A 23-amino-acid polypeptide reads, in one-letter code: Conotoxin Cl6c (23 aa).

Intrachain disulfides connect cysteine 2/cysteine 12, cysteine 5/cysteine 17, and cysteine 11/cysteine 21.

In terms of tissue distribution, expressed by the venom duct.

The protein localises to the secreted. The chain is Conotoxin Cl6c from Californiconus californicus (California cone).